An 80-amino-acid polypeptide reads, in one-letter code: RNA-binding protein Hfq (80 aa).

The Sm domain maps to 10-70; the sequence is DLFLNTVRKQ…ISTIMPGQPM (61 aa).

The protein belongs to the Hfq family. As to quaternary structure, homohexamer.

Its function is as follows. RNA chaperone that binds small regulatory RNA (sRNAs) and mRNAs to facilitate mRNA translational regulation in response to envelope stress, environmental stress and changes in metabolite concentrations. Also binds with high specificity to tRNAs. In Rhizobium rhizogenes (strain K84 / ATCC BAA-868) (Agrobacterium radiobacter), this protein is RNA-binding protein Hfq.